The chain runs to 118 residues: uncharacterized protein (118 aa).

This is an uncharacterized protein from Bacillus subtilis (strain 168).